A 276-amino-acid chain; its full sequence is SKA complex subunit 1 homolog (276 aa).

Residues 48–78 (VDVSLTAMEAQLQAVRRRLQEEREAFPKAKK) adopt a coiled-coil conformation.

The protein belongs to the SKA1 family.

The sequence is that of SKA complex subunit 1 homolog from Oryza sativa subsp. japonica (Rice).